Consider the following 292-residue polypeptide: Putative xanthine dehydrogenase FAD-binding subunit XdhB (292 aa).

The region spanning 1–176 (MFDFASYHRA…VAFHFPPQPK (176 aa)) is the FAD-binding PCMH-type domain. FAD contacts are provided by residues 27 to 34 (KLLAGGTD), 109 to 113 (ATYGG), isoleucine 165, and phenylalanine 184.

In terms of assembly, heterotrimer of XdhA, XdhB and XdhC. Requires FAD as cofactor.

The enzyme catalyses xanthine + NAD(+) + H2O = urate + NADH + H(+). It catalyses the reaction hypoxanthine + NAD(+) + H2O = xanthine + NADH + H(+). It functions in the pathway purine metabolism; hypoxanthine degradation; urate from hypoxanthine: step 1/2. Its pathway is purine metabolism; hypoxanthine degradation; urate from hypoxanthine: step 2/2. Functionally, presumed to be a dehydrogenase, but possibly an oxidase. Participates in limited purine salvage (requires aspartate) but does not support aerobic growth on purines as the sole carbon source (purine catabolism). In Escherichia coli (strain K12), this protein is Putative xanthine dehydrogenase FAD-binding subunit XdhB (xdhB).